A 669-amino-acid chain; its full sequence is UvrABC system protein C (669 aa).

Residues Asp14 to Ile91 enclose the GIY-YIG domain. The 36-residue stretch at Lys196–Leu231 folds into the UVR domain. Positions Pro647–Ser669 are disordered. Positions His648–Lys658 are enriched in basic and acidic residues.

Belongs to the UvrC family. Interacts with UvrB in an incision complex.

It localises to the cytoplasm. In terms of biological role, the UvrABC repair system catalyzes the recognition and processing of DNA lesions. UvrC both incises the 5' and 3' sides of the lesion. The N-terminal half is responsible for the 3' incision and the C-terminal half is responsible for the 5' incision. This Lactococcus lactis subsp. cremoris (strain MG1363) protein is UvrABC system protein C.